Reading from the N-terminus, the 375-residue chain is Queuine tRNA-ribosyltransferase (375 aa).

Asp89 serves as the catalytic Proton acceptor. Substrate is bound by residues 89–93 (DSGGF), Asp143, Gln187, and Gly214. Positions 245-251 (GVGKPED) are RNA binding. Asp264 serves as the catalytic Nucleophile. The tract at residues 269 to 273 (TRNAR) is RNA binding; important for wobble base 34 recognition. Positions 302, 304, 307, and 333 each coordinate Zn(2+).

This sequence belongs to the queuine tRNA-ribosyltransferase family. In terms of assembly, homodimer. Within each dimer, one monomer is responsible for RNA recognition and catalysis, while the other monomer binds to the replacement base PreQ1. The cofactor is Zn(2+).

It carries out the reaction 7-aminomethyl-7-carbaguanine + guanosine(34) in tRNA = 7-aminomethyl-7-carbaguanosine(34) in tRNA + guanine. It functions in the pathway tRNA modification; tRNA-queuosine biosynthesis. Its function is as follows. Catalyzes the base-exchange of a guanine (G) residue with the queuine precursor 7-aminomethyl-7-deazaguanine (PreQ1) at position 34 (anticodon wobble position) in tRNAs with GU(N) anticodons (tRNA-Asp, -Asn, -His and -Tyr). Catalysis occurs through a double-displacement mechanism. The nucleophile active site attacks the C1' of nucleotide 34 to detach the guanine base from the RNA, forming a covalent enzyme-RNA intermediate. The proton acceptor active site deprotonates the incoming PreQ1, allowing a nucleophilic attack on the C1' of the ribose to form the product. After dissociation, two additional enzymatic reactions on the tRNA convert PreQ1 to queuine (Q), resulting in the hypermodified nucleoside queuosine (7-(((4,5-cis-dihydroxy-2-cyclopenten-1-yl)amino)methyl)-7-deazaguanosine). This is Queuine tRNA-ribosyltransferase from Aliivibrio fischeri (strain ATCC 700601 / ES114) (Vibrio fischeri).